Reading from the N-terminus, the 44-residue chain is U2-agatoxin-Ao1s (44 aa).

Residues 1-9 (KKVYSFLKL) constitute a propeptide that is removed on maturation. 3 disulfide bridges follow: cysteine 12–cysteine 28, cysteine 19–cysteine 33, and cysteine 27–cysteine 43.

This sequence belongs to the neurotoxin 01 (U2-agtx) family. Expressed by the venom gland.

The protein resides in the secreted. Functionally, insect active toxin causing rapid but reversible paralysis in crickets. No activity shown in mammals. Does not show effect on mammalian voltage-gated calcium channels. The sequence is that of U2-agatoxin-Ao1s from Agelena orientalis (Funnel-web spider).